We begin with the raw amino-acid sequence, 253 residues long: Tryptophan synthase alpha chain (253 aa).

Active-site proton acceptor residues include Glu-47 and Asp-58.

This sequence belongs to the TrpA family. Tetramer of two alpha and two beta chains.

The enzyme catalyses (1S,2R)-1-C-(indol-3-yl)glycerol 3-phosphate + L-serine = D-glyceraldehyde 3-phosphate + L-tryptophan + H2O. It participates in amino-acid biosynthesis; L-tryptophan biosynthesis; L-tryptophan from chorismate: step 5/5. In terms of biological role, the alpha subunit is responsible for the aldol cleavage of indoleglycerol phosphate to indole and glyceraldehyde 3-phosphate. This is Tryptophan synthase alpha chain from Lactococcus lactis subsp. cremoris (strain SK11).